Consider the following 428-residue polypeptide: Glutamate-1-semialdehyde 2,1-aminomutase (428 aa).

K265 is subject to N6-(pyridoxal phosphate)lysine.

This sequence belongs to the class-III pyridoxal-phosphate-dependent aminotransferase family. HemL subfamily. Homodimer. Pyridoxal 5'-phosphate serves as cofactor.

It is found in the cytoplasm. The catalysed reaction is (S)-4-amino-5-oxopentanoate = 5-aminolevulinate. The protein operates within porphyrin-containing compound metabolism; protoporphyrin-IX biosynthesis; 5-aminolevulinate from L-glutamyl-tRNA(Glu): step 2/2. This is Glutamate-1-semialdehyde 2,1-aminomutase from Shewanella loihica (strain ATCC BAA-1088 / PV-4).